Here is a 450-residue protein sequence, read N- to C-terminus: ATP-dependent protease ATPase subunit HslU (450 aa).

ATP contacts are provided by residues I18 and 60–65; that span reads GVGKTE. Polar residues predominate over residues 140 to 151; that stretch reads KTSSSGWAQQQE. The segment at 140–162 is disordered; that stretch reads KTSSSGWAQQQEETPENDDQRGT. D263, E328, and R400 together coordinate ATP.

It belongs to the ClpX chaperone family. HslU subfamily. A double ring-shaped homohexamer of HslV is capped on each side by a ring-shaped HslU homohexamer. The assembly of the HslU/HslV complex is dependent on binding of ATP.

It is found in the cytoplasm. Functionally, ATPase subunit of a proteasome-like degradation complex; this subunit has chaperone activity. The binding of ATP and its subsequent hydrolysis by HslU are essential for unfolding of protein substrates subsequently hydrolyzed by HslV. HslU recognizes the N-terminal part of its protein substrates and unfolds these before they are guided to HslV for hydrolysis. In Idiomarina loihiensis (strain ATCC BAA-735 / DSM 15497 / L2-TR), this protein is ATP-dependent protease ATPase subunit HslU.